We begin with the raw amino-acid sequence, 266 residues long: 5'-nucleotidase SurE (266 aa).

4 residues coordinate a divalent metal cation: aspartate 8, aspartate 9, serine 42, and asparagine 98.

The protein belongs to the SurE nucleotidase family. A divalent metal cation is required as a cofactor.

Its subcellular location is the cytoplasm. It carries out the reaction a ribonucleoside 5'-phosphate + H2O = a ribonucleoside + phosphate. Nucleotidase that shows phosphatase activity on nucleoside 5'-monophosphates. In Methanocaldococcus jannaschii (strain ATCC 43067 / DSM 2661 / JAL-1 / JCM 10045 / NBRC 100440) (Methanococcus jannaschii), this protein is 5'-nucleotidase SurE.